The sequence spans 71 residues: DNA gyrase inhibitor YacG (71 aa).

Positions 8, 11, 27, and 31 each coordinate Zn(2+). A disordered region spans residues 48-71 (VVEDDDLPPDAPGGESGGASGRLN). Over residues 61–71 (GESGGASGRLN) the composition is skewed to gly residues.

It belongs to the DNA gyrase inhibitor YacG family. Interacts with GyrB. Requires Zn(2+) as cofactor.

Functionally, inhibits all the catalytic activities of DNA gyrase by preventing its interaction with DNA. Acts by binding directly to the C-terminal domain of GyrB, which probably disrupts DNA binding by the gyrase. This chain is DNA gyrase inhibitor YacG, found in Ralstonia nicotianae (strain ATCC BAA-1114 / GMI1000) (Ralstonia solanacearum).